A 425-amino-acid polypeptide reads, in one-letter code: MASSIICQEHCQISGQAKIDILLVGDVTVGYLADTVQKLFANIAEVTITISDTKEAAALLDDCIFNMVLLKVPSSLSAEELEAIKLIRFGKKKNTHSLFVFIIPENFKGCISGHGMDIALTEPLTMEKMSNVVKYWTTCPSNTVKTENATGPEELGLPLQRSYSEHLGYFPTDLFACSESLRNGNGLELNASLSEFEKNKKISLLHSSKEKLRRERIKYCCEQLRTLLPYVKGRKNDAASVLEATVDYVKYIREKISPAVMAQITEALQSNMRFCKKQQTPIELSLPGTVMAQRENSVMSTYSPERGLQFLTNTCWNGCSTPDAESSLDEAVRVPSSSASENAIGDPYKTHISSAALSLNSLHTVRYYSKVTPSYDATAVTNQNISIHLPSAMPPVSKLLPRHCTSGLGQTCTTHPNCLQQFWAY.

The bHLH domain occupies 201-252 (KISLLHSSKEKLRRERIKYCCEQLRTLLPYVKGRKNDAASVLEATVDYVKYI).

Forms both hetero- and homodimers with SOHLH1.

It is found in the nucleus. It localises to the cytoplasm. In terms of biological role, transcription regulator of both male and female germline differentiation. Suppresses genes involved in spermatogonial stem cells maintenance, and induces genes important for spermatogonial differentiation. Coordinates oocyte differentiation without affecting meiosis I. In Homo sapiens (Human), this protein is Spermatogenesis- and oogenesis-specific basic helix-loop-helix-containing protein 2 (SOHLH2).